The sequence spans 99 residues: Progonadoliberin-1 (99 aa).

Residues 1-26 (MAAQTFALRLLLVGTLLGTLLGQGCC) form the signal peptide. Glutamine 27 carries the pyrrolidone carboxylic acid modification. Glycine 36 carries the post-translational modification Glycine amide.

The protein belongs to the GnRH family.

The protein localises to the secreted. In terms of biological role, stimulates the secretion of gonadotropins. The polypeptide is Progonadoliberin-1 (gnrh1) (Dicentrarchus labrax (European seabass)).